Here is a 157-residue protein sequence, read N- to C-terminus: uncharacterized protein (157 aa).

The helical transmembrane segment at 6–26 (LVGGVLRVLVVVGAVFDVAVL) threads the bilayer. In terms of domain architecture, Ricin B-type lectin spans 33-157 (ADGPVQLKSR…APDQQWDSVP (125 aa)).

The protein localises to the membrane. This is an uncharacterized protein from Mycobacterium tuberculosis (strain CDC 1551 / Oshkosh).